The primary structure comprises 199 residues: MAP6 domain-containing protein 1 (199 aa).

3 S-palmitoyl cysteine lipidation sites follow: cysteine 5, cysteine 10, and cysteine 11. Positions 33–110 (YSDLDSEEPG…SAQSSAPPAP (78 aa)) are disordered. Residue serine 38 is modified to Phosphoserine. 2 mn regions span residues 130-143 (TTSY…WTGV) and 165-177 (DSSP…VPEV). Position 167 is a phosphoserine (serine 167).

It belongs to the STOP family. In terms of assembly, interacts with calmodulin. Palmitoylated. Palmitoylation enhances association with microtubules.

Its subcellular location is the golgi apparatus. It localises to the cytoplasm. The protein resides in the cytoskeleton. Its function is as follows. May have microtubule-stabilizing activity. This chain is MAP6 domain-containing protein 1 (MAP6D1), found in Homo sapiens (Human).